The following is a 217-amino-acid chain: Protein GrpE (217 aa).

This sequence belongs to the GrpE family. In terms of assembly, homodimer.

Its subcellular location is the cytoplasm. Its function is as follows. Participates actively in the response to hyperosmotic and heat shock by preventing the aggregation of stress-denatured proteins, in association with DnaK and GrpE. It is the nucleotide exchange factor for DnaK and may function as a thermosensor. Unfolded proteins bind initially to DnaJ; upon interaction with the DnaJ-bound protein, DnaK hydrolyzes its bound ATP, resulting in the formation of a stable complex. GrpE releases ADP from DnaK; ATP binding to DnaK triggers the release of the substrate protein, thus completing the reaction cycle. Several rounds of ATP-dependent interactions between DnaJ, DnaK and GrpE are required for fully efficient folding. The polypeptide is Protein GrpE (Mycoplasma genitalium (strain ATCC 33530 / DSM 19775 / NCTC 10195 / G37) (Mycoplasmoides genitalium)).